We begin with the raw amino-acid sequence, 483 residues long: Betaine aldehyde dehydrogenase (483 aa).

The K(+) site is built by Ile27 and Asp93. 149 to 151 (GAW) provides a ligand contact to NAD(+). The Charge relay system role is filled by Lys161. Residue 175 to 178 (KPSE) participates in NAD(+) binding. Val179 provides a ligand contact to K(+). 228–231 (SVPT) serves as a coordination point for NAD(+). K(+) is bound at residue Val243. The Proton acceptor role is filled by Glu249. NAD(+) contacts are provided by Gly251, Cys283, and Glu380. The Nucleophile role is filled by Cys283. Cys283 is modified (cysteine sulfenic acid (-SOH)). Lys450 and Gly453 together coordinate K(+). The active-site Charge relay system is Glu457.

This sequence belongs to the aldehyde dehydrogenase family. Dimer of dimers. The cofactor is K(+).

It carries out the reaction betaine aldehyde + NAD(+) + H2O = glycine betaine + NADH + 2 H(+). It participates in amine and polyamine biosynthesis; betaine biosynthesis via choline pathway; betaine from betaine aldehyde: step 1/1. In terms of biological role, involved in the biosynthesis of the osmoprotectant glycine betaine. Catalyzes the irreversible oxidation of betaine aldehyde to the corresponding acid. The chain is Betaine aldehyde dehydrogenase from Cereibacter sphaeroides (strain ATCC 17023 / DSM 158 / JCM 6121 / CCUG 31486 / LMG 2827 / NBRC 12203 / NCIMB 8253 / ATH 2.4.1.) (Rhodobacter sphaeroides).